We begin with the raw amino-acid sequence, 462 residues long: Cysteine--tRNA ligase (462 aa).

Cysteine 30 is a binding site for Zn(2+). The 'HIGH' region signature appears at 32–42 (MTVYDYCHVGH). Positions 214, 239, and 243 each coordinate Zn(2+). Residues 271-275 (KMSKS) carry the 'KMSKS' region motif. Lysine 274 is a binding site for ATP.

The protein belongs to the class-I aminoacyl-tRNA synthetase family. Monomer. The cofactor is Zn(2+).

Its subcellular location is the cytoplasm. The catalysed reaction is tRNA(Cys) + L-cysteine + ATP = L-cysteinyl-tRNA(Cys) + AMP + diphosphate. The protein is Cysteine--tRNA ligase of Cupriavidus taiwanensis (strain DSM 17343 / BCRC 17206 / CCUG 44338 / CIP 107171 / LMG 19424 / R1) (Ralstonia taiwanensis (strain LMG 19424)).